The chain runs to 548 residues: ATP synthase subunit alpha (548 aa).

172–179 (GDRKTGKT) serves as a coordination point for ATP.

It belongs to the ATPase alpha/beta chains family. F-type ATPases have 2 components, CF(1) - the catalytic core - and CF(0) - the membrane proton channel. CF(1) has five subunits: alpha(3), beta(3), gamma(1), delta(1), epsilon(1). CF(0) has three main subunits: a(1), b(2) and c(9-12). The alpha and beta chains form an alternating ring which encloses part of the gamma chain. CF(1) is attached to CF(0) by a central stalk formed by the gamma and epsilon chains, while a peripheral stalk is formed by the delta and b chains.

It is found in the cell membrane. It carries out the reaction ATP + H2O + 4 H(+)(in) = ADP + phosphate + 5 H(+)(out). Produces ATP from ADP in the presence of a proton gradient across the membrane. The alpha chain is a regulatory subunit. This Mycobacteroides abscessus (strain ATCC 19977 / DSM 44196 / CCUG 20993 / CIP 104536 / JCM 13569 / NCTC 13031 / TMC 1543 / L948) (Mycobacterium abscessus) protein is ATP synthase subunit alpha.